We begin with the raw amino-acid sequence, 230 residues long: uncharacterized protein (230 aa).

The region spanning 2–69 (HRLAKIISNA…KPRLWIYYKP (68 aa)) is the S4 RNA-binding domain. Asp102 acts as the Nucleophile in catalysis.

It belongs to the pseudouridine synthase RsuA family.

The catalysed reaction is a uridine in RNA = a pseudouridine in RNA. This is an uncharacterized protein from Rickettsia conorii (strain ATCC VR-613 / Malish 7).